The chain runs to 640 residues: 1-deoxy-D-xylulose-5-phosphate synthase (640 aa).

Residues His-79 and 120–122 (AHS) contribute to the thiamine diphosphate site. Asp-151 lines the Mg(2+) pocket. Thiamine diphosphate contacts are provided by residues 152–153 (GA), Asn-180, Tyr-289, and Glu-371. A Mg(2+)-binding site is contributed by Asn-180.

Belongs to the transketolase family. DXPS subfamily. Homodimer. Requires Mg(2+) as cofactor. Thiamine diphosphate is required as a cofactor.

The catalysed reaction is D-glyceraldehyde 3-phosphate + pyruvate + H(+) = 1-deoxy-D-xylulose 5-phosphate + CO2. The protein operates within metabolic intermediate biosynthesis; 1-deoxy-D-xylulose 5-phosphate biosynthesis; 1-deoxy-D-xylulose 5-phosphate from D-glyceraldehyde 3-phosphate and pyruvate: step 1/1. In terms of biological role, catalyzes the acyloin condensation reaction between C atoms 2 and 3 of pyruvate and glyceraldehyde 3-phosphate to yield 1-deoxy-D-xylulose-5-phosphate (DXP). The sequence is that of 1-deoxy-D-xylulose-5-phosphate synthase from Erythrobacter litoralis (strain HTCC2594).